A 315-amino-acid chain; its full sequence is Small ribosomal subunit biogenesis GTPase RsgA (315 aa).

A CP-type G domain is found at 80-241 (LSKQTHIIAS…IIDTPGIKGF (162 aa)). GTP is bound by residues 129 to 132 (NKVD) and 183 to 191 (GHSGTGKST). Positions 265, 270, 272, and 278 each coordinate Zn(2+).

The protein belongs to the TRAFAC class YlqF/YawG GTPase family. RsgA subfamily. In terms of assembly, monomer. Associates with 30S ribosomal subunit, binds 16S rRNA. It depends on Zn(2+) as a cofactor.

The protein localises to the cytoplasm. One of several proteins that assist in the late maturation steps of the functional core of the 30S ribosomal subunit. Helps release RbfA from mature subunits. May play a role in the assembly of ribosomal proteins into the subunit. Circularly permuted GTPase that catalyzes slow GTP hydrolysis, GTPase activity is stimulated by the 30S ribosomal subunit. The polypeptide is Small ribosomal subunit biogenesis GTPase RsgA (Christiangramia forsetii (strain DSM 17595 / CGMCC 1.15422 / KT0803) (Gramella forsetii)).